We begin with the raw amino-acid sequence, 315 residues long: Homoserine kinase (315 aa).

Position 97 to 107 (97 to 107) interacts with ATP; the sequence is PPARGLGSSAT.

Belongs to the GHMP kinase family. Homoserine kinase subfamily.

The protein localises to the cytoplasm. It catalyses the reaction L-homoserine + ATP = O-phospho-L-homoserine + ADP + H(+). The protein operates within amino-acid biosynthesis; L-threonine biosynthesis; L-threonine from L-aspartate: step 4/5. In terms of biological role, catalyzes the ATP-dependent phosphorylation of L-homoserine to L-homoserine phosphate. In Prochlorococcus marinus subsp. pastoris (strain CCMP1986 / NIES-2087 / MED4), this protein is Homoserine kinase.